The chain runs to 297 residues: MREEDHLRKGEKSHVFESLVSGAIAGLAARSAIAPLDTLKLRLQLGTDTLPHTLKSLIRHEGLLALWKGNLAGSIMYIIYGSVQFGTYSYTNAALLKVCDVPPTIHSTLAGAITGMASSLCSYPFDVLRTRLATTTTTTTTATTGRSGRGLYQHIERIYIREGLGGFFHGVATSMANVTVSTAAMFGTYEGIRARWPETNAGTAGAISGVISRTITFPLDTIRRRLQIRTSSELGQMTNNGYIGKHMQRSAITLCVQIVRDEGVKVLFRGIGLGLLKSVPNTAINLWVYENLMRVLT.

3 Solcar repeats span residues 13–94 (SHVF…TNAA), 102–195 (PPTI…IRAR), and 196–295 (WPET…LMRV). 6 helical membrane passes run 19–36 (LVSGAIAGLAARSAIAPL), 75–91 (IMYIIYGSVQFGTYSYT), 109–128 (LAGAITGMASSLCSYPFDVL), 163–187 (GLGGFFHGVATSMANVTVSTAAMFG), 203–219 (TAGAISGVISRTITFPL), and 270–287 (GIGLGLLKSVPNTAINLW).

This sequence belongs to the mitochondrial carrier (TC 2.A.29) family.

The protein resides in the mitochondrion inner membrane. In terms of biological role, mitochondrial transporter that mediates uptake of thiamine pyrophosphate (ThPP) into mitochondria. In Vanderwaltozyma polyspora (strain ATCC 22028 / DSM 70294 / BCRC 21397 / CBS 2163 / NBRC 10782 / NRRL Y-8283 / UCD 57-17) (Kluyveromyces polysporus), this protein is Mitochondrial thiamine pyrophosphate carrier 1 (TPC1).